The sequence spans 248 residues: Phycocyanobilin:ferredoxin oxidoreductase (248 aa).

Belongs to the HY2 family.

The enzyme catalyses (2R,3Z)-phycocyanobilin + 4 oxidized [2Fe-2S]-[ferredoxin] = biliverdin IXalpha + 4 reduced [2Fe-2S]-[ferredoxin] + 4 H(+). Functionally, catalyzes the four-electron reduction of biliverdin IX-alpha (2-electron reduction at both the A and D rings); the reaction proceeds via an isolatable 2-electron intermediate, 181,182-dihydrobiliverdin. The sequence is that of Phycocyanobilin:ferredoxin oxidoreductase (pcyA) from Synechococcus elongatus (strain ATCC 33912 / PCC 7942 / FACHB-805) (Anacystis nidulans R2).